Consider the following 229-residue polypeptide: 5'-methylthioadenosine/S-adenosylhomocysteine nucleosidase (229 aa).

E12 (proton acceptor) is an active-site residue. Substrate-binding positions include G78, M152, and M173–E174. D197 serves as the catalytic Proton donor.

It belongs to the PNP/UDP phosphorylase family. MtnN subfamily.

It catalyses the reaction S-adenosyl-L-homocysteine + H2O = S-(5-deoxy-D-ribos-5-yl)-L-homocysteine + adenine. The enzyme catalyses S-methyl-5'-thioadenosine + H2O = 5-(methylsulfanyl)-D-ribose + adenine. It carries out the reaction 5'-deoxyadenosine + H2O = 5-deoxy-D-ribose + adenine. Its pathway is amino-acid biosynthesis; L-methionine biosynthesis via salvage pathway; S-methyl-5-thio-alpha-D-ribose 1-phosphate from S-methyl-5'-thioadenosine (hydrolase route): step 1/2. Catalyzes the irreversible cleavage of the glycosidic bond in both 5'-methylthioadenosine (MTA) and S-adenosylhomocysteine (SAH/AdoHcy) to adenine and the corresponding thioribose, 5'-methylthioribose and S-ribosylhomocysteine, respectively. Also cleaves 5'-deoxyadenosine, a toxic by-product of radical S-adenosylmethionine (SAM) enzymes, into 5-deoxyribose and adenine. This Oceanobacillus iheyensis (strain DSM 14371 / CIP 107618 / JCM 11309 / KCTC 3954 / HTE831) protein is 5'-methylthioadenosine/S-adenosylhomocysteine nucleosidase.